The sequence spans 192 residues: Ribosomal RNA small subunit methyltransferase G (192 aa).

S-adenosyl-L-methionine contacts are provided by residues G63, L68, 112 to 113 (IE), and R125.

Belongs to the methyltransferase superfamily. RNA methyltransferase RsmG family.

The protein localises to the cytoplasm. The enzyme catalyses guanosine(527) in 16S rRNA + S-adenosyl-L-methionine = N(7)-methylguanosine(527) in 16S rRNA + S-adenosyl-L-homocysteine. Specifically methylates the N7 position of guanine in position 527 of 16S rRNA. In Rickettsia africae (strain ESF-5), this protein is Ribosomal RNA small subunit methyltransferase G.